A 259-amino-acid chain; its full sequence is MYILKIAYDGRYSFQQQPHKQTVCDILLDALEETGFLAKKKVIYSGGRTDKGVSALGNFVVVELKKEPILSYINAKLKDKGIWVLGYREIDEIPKVKYRHYRYILPNIGYDVDAIKEGAKKMIGTHSFHNLSKRDRTKEKSPIRTIYDIKISENEFYLTVDIIGESFLWNMVRKIVGALDLVGRGKKPVEWIDKLLDENHREGVPTFPPEGLILVEAKVDIEYIYDNYSIRKFKEYWGEFFKLQVMKIGIAKTVLEFTK.

D50 functions as the Nucleophile in the catalytic mechanism. Y101 is a binding site for substrate.

It belongs to the tRNA pseudouridine synthase TruA family.

It catalyses the reaction uridine(38/39/40) in tRNA = pseudouridine(38/39/40) in tRNA. Formation of pseudouridine at positions 38, 39 and 40 in the anticodon stem and loop of transfer RNAs. This is tRNA pseudouridine synthase A from Methanocaldococcus jannaschii (strain ATCC 43067 / DSM 2661 / JAL-1 / JCM 10045 / NBRC 100440) (Methanococcus jannaschii).